The following is a 419-amino-acid chain: Glutamyl-tRNA reductase (419 aa).

Residues 50–53, S108, 113–115, and Q119 contribute to the substrate site; these read TCNR and ETQ. C51 (nucleophile) is an active-site residue. 188 to 193 is a binding site for NADP(+); it reads GAGEMI.

It belongs to the glutamyl-tRNA reductase family. As to quaternary structure, homodimer.

It catalyses the reaction (S)-4-amino-5-oxopentanoate + tRNA(Glu) + NADP(+) = L-glutamyl-tRNA(Glu) + NADPH + H(+). It participates in porphyrin-containing compound metabolism; protoporphyrin-IX biosynthesis; 5-aminolevulinate from L-glutamyl-tRNA(Glu): step 1/2. Catalyzes the NADPH-dependent reduction of glutamyl-tRNA(Glu) to glutamate 1-semialdehyde (GSA). The protein is Glutamyl-tRNA reductase of Albidiferax ferrireducens (strain ATCC BAA-621 / DSM 15236 / T118) (Rhodoferax ferrireducens).